The following is a 64-amino-acid chain: MPKNKTHSGTAKRFRVTGSGKLRREQAGRRHILEKKSSRVTRRLEGTEAVAKADVKRINKLLGR.

Basic residues predominate over residues 1 to 15 (MPKNKTHSGTAKRFR). The tract at residues 1–27 (MPKNKTHSGTAKRFRVTGSGKLRREQA) is disordered.

The protein belongs to the bacterial ribosomal protein bL35 family.

The sequence is that of Large ribosomal subunit protein bL35 from Saccharopolyspora erythraea (strain ATCC 11635 / DSM 40517 / JCM 4748 / NBRC 13426 / NCIMB 8594 / NRRL 2338).